Consider the following 206-residue polypeptide: Large ribosomal subunit protein uL4 (206 aa).

Residues 44-87 (KRQGTQKAKTRSEVRGGGRKPWRQKGTGHARQGSTRSPQWTGGG) are disordered. Positions 60-71 (GGRKPWRQKGTG) are enriched in basic residues.

Belongs to the universal ribosomal protein uL4 family. Part of the 50S ribosomal subunit.

In terms of biological role, one of the primary rRNA binding proteins, this protein initially binds near the 5'-end of the 23S rRNA. It is important during the early stages of 50S assembly. It makes multiple contacts with different domains of the 23S rRNA in the assembled 50S subunit and ribosome. Forms part of the polypeptide exit tunnel. The sequence is that of Large ribosomal subunit protein uL4 from Agathobacter rectalis (strain ATCC 33656 / DSM 3377 / JCM 17463 / KCTC 5835 / VPI 0990) (Eubacterium rectale).